The sequence spans 808 residues: MEILFSISILALLFSGVVAAPSDDDVFEEVRVGLVVDLSSIQGKILETSFNLALSDFYGINNGYRTRVSVLVRDSQGDPIIALAAATDLLKNAKAEAIVGAQSLQEAKLLATISEKAKVPVISTFLPNTLSLKKYDNFIQWTHDTTSEAKGITSLIQDFSCKSVVVIYEDADDWSESLQILVENFQDKGIYIARSASFAVSSSGENHMMNQLRKLKVSRASVFVVHMSEILVSRLFQCVEKLGLMEEAFAWILTARTMNYLEHFAITRSMQGVIGFKSYIPVSEEVKNFTSRLRKRMGDDTETEHSSVIIGLRAHDIACILANAVEKFSVSGKVEASSNVSADLLDTIRHSRFKGLSGDIQISDNKFISETFEIVNIGREKQRRIGLWSGGSFSQRRQIVWPGRSRKIPRHRVLAEKGEKKVLRVLVTAGNKVPHLVSVRPDPETGVNTVSGFCVEVFKTCIAPFNYELEFIPYRGNNDNLAYLLSTQRDKYDAAVGDITITSNRSLYVDFTLPYTDIGIGILTVKKKSQGMWTFFDPFEKSLWLASGAFFVLTGIVVWLVERSVNPEFQGSWGQQLSMMLWFGFSTIVFAHREKLQKMSSRFLVIVWVFVVLILTSSYSANLTSTKTISRMQLNHQMVFGGSTTSMTAKLGSINAVEAYAQLLRDGTLNHVINEIPYLSILIGNYPNDFVMTDRVTNTNGFGFMFQKGSDLVPKVSREIAKLRSLGMLKDMEKKWFQKLDSLNVHSNTEEVASTNDDDEASKRFTFRELRGLFIIAGAAHVLVLALHLFHTRQEVSRLCTKLQSFYK.

The N-terminal stretch at Met-1–Ala-19 is a signal peptide. Residues Ala-20 to Lys-541 are Extracellular-facing. Residues Asn-288, Asn-339, and Asn-504 are each glycosylated (N-linked (GlcNAc...) asparagine). A helical transmembrane segment spans residues Ser-542 to Glu-562. Topologically, residues Arg-563–Gln-570 are cytoplasmic. A helical transmembrane segment spans residues Gly-571–Ala-591. The Cytoplasmic segment spans residues His-592 to Arg-602. The chain crosses the membrane as a helical span at residues Phe-603–Leu-623. At Thr-624 to Arg-771 the chain is on the extracellular side. Residues Gly-772 to Thr-792 traverse the membrane as a helical segment. Over Arg-793–Lys-808 the chain is Cytoplasmic.

This sequence belongs to the glutamate-gated ion channel (TC 1.A.10.1) family. As to quaternary structure, may form heteromers. Expressed predominantly in roots. First detected in the root-shoot junction, and later in lateral roots and at the margin of matures leaves.

It is found in the membrane. In terms of biological role, glutamate-gated receptor that probably acts as a non-selective cation channel. Can transport sodium, potassium, and calcium ions. Functions as a carbon and nitrogen regulator and/or sensor that regulates carbon and nitrogen metabolism and distinct physiological process such as germination through the control of acid abscisic (ABA) biosynthesis. May be involved in light-signal transduction and calcium homeostasis via the regulation of calcium influx into cells. Seems required for the regulation of the abscisic acid (ABA) signaling pathway that modulates many aspects of plant physiology such as seed germination and response to drought (e.g. stomata opening). This chain is Glutamate receptor 1.1 (GLR1.1), found in Arabidopsis thaliana (Mouse-ear cress).